The following is a 586-amino-acid chain: Phosphomethylpyrimidine synthase (586 aa).

2 disordered regions span residues 38–59 and 92–114; these read IELS…TSGP and GREI…VFPQ. The span at 92-102 shows a compositional bias: basic and acidic residues; the sequence is GREIKPEDDGV. Substrate is bound by residues Asn193, Met222, Tyr251, His287, 307–309, 348–351, and Glu387; these read SRG and DGLR. His391 serves as a coordination point for Zn(2+). Tyr414 serves as a coordination point for substrate. Residue His455 coordinates Zn(2+). [4Fe-4S] cluster contacts are provided by Cys535, Cys538, and Cys543.

It belongs to the ThiC family. [4Fe-4S] cluster is required as a cofactor.

It carries out the reaction 5-amino-1-(5-phospho-beta-D-ribosyl)imidazole + S-adenosyl-L-methionine = 4-amino-2-methyl-5-(phosphooxymethyl)pyrimidine + CO + 5'-deoxyadenosine + formate + L-methionine + 3 H(+). The protein operates within cofactor biosynthesis; thiamine diphosphate biosynthesis. Functionally, catalyzes the synthesis of the hydroxymethylpyrimidine phosphate (HMP-P) moiety of thiamine from aminoimidazole ribotide (AIR) in a radical S-adenosyl-L-methionine (SAM)-dependent reaction. The protein is Phosphomethylpyrimidine synthase of Bacillus cytotoxicus (strain DSM 22905 / CIP 110041 / 391-98 / NVH 391-98).